We begin with the raw amino-acid sequence, 121 residues long: 18 kDa learning-associated protein of slug (121 aa).

2 disordered regions span residues 44–67 (TMKT…GSME) and 95–121 (AVKK…AIKW). Over residues 45 to 64 (MKTTEPIQENKTSEGTSTDG) the composition is skewed to polar residues.

Belongs to the learning-associated protein family. As to expression, expressed predominantly in cerebral ganglia (at protein level). The mRNA is highly expressed in cerebral ganglia, and is detected at lower levels in visceral-pedal ganglia, head, and body, but is not detected in the tail.

Its subcellular location is the cytoplasm. It is found in the secreted. May be involved in modulating long-term memory formation and retention, at least with respect to odor-taste associative learning. The polypeptide is 18 kDa learning-associated protein of slug (Lehmannia marginata (Tree slug)).